We begin with the raw amino-acid sequence, 198 residues long: Recombination protein RecR (198 aa).

The C4-type zinc finger occupies 57 to 72 (CSTCQTLTDQDPCAIC). The 96-residue stretch at 80-175 (RMICVVEGVP…KVTRIAQGVP (96 aa)) folds into the Toprim domain.

This sequence belongs to the RecR family.

Its function is as follows. May play a role in DNA repair. It seems to be involved in an RecBC-independent recombinational process of DNA repair. It may act with RecF and RecO. The sequence is that of Recombination protein RecR from Anaeromyxobacter dehalogenans (strain 2CP-C).